The sequence spans 97 residues: Co-chaperonin GroES (97 aa).

It belongs to the GroES chaperonin family. In terms of assembly, heptamer of 7 subunits arranged in a ring. Interacts with the chaperonin GroEL.

The protein localises to the cytoplasm. Its function is as follows. Together with the chaperonin GroEL, plays an essential role in assisting protein folding. The GroEL-GroES system forms a nano-cage that allows encapsulation of the non-native substrate proteins and provides a physical environment optimized to promote and accelerate protein folding. GroES binds to the apical surface of the GroEL ring, thereby capping the opening of the GroEL channel. The chain is Co-chaperonin GroES from Gemmatimonas aurantiaca (strain DSM 14586 / JCM 11422 / NBRC 100505 / T-27).